Reading from the N-terminus, the 131-residue chain is Anaerobic and virulence modulator AnvM (131 aa).

Its function is as follows. Plays an essential role by modulating the expression of hundreds of genes including quorum sensing system genes and oxidative stress resistance genes under both aerobic and anaerobic conditions. This chain is Anaerobic and virulence modulator AnvM, found in Pseudomonas aeruginosa (strain ATCC 15692 / DSM 22644 / CIP 104116 / JCM 14847 / LMG 12228 / 1C / PRS 101 / PAO1).